We begin with the raw amino-acid sequence, 126 residues long: Large ribosomal subunit protein bL12 (126 aa).

This sequence belongs to the bacterial ribosomal protein bL12 family. As to quaternary structure, homodimer. Part of the ribosomal stalk of the 50S ribosomal subunit. Forms a multimeric L10(L12)X complex, where L10 forms an elongated spine to which 2 to 4 L12 dimers bind in a sequential fashion. Binds GTP-bound translation factors.

Functionally, forms part of the ribosomal stalk which helps the ribosome interact with GTP-bound translation factors. Is thus essential for accurate translation. The sequence is that of Large ribosomal subunit protein bL12 from Methylocella silvestris (strain DSM 15510 / CIP 108128 / LMG 27833 / NCIMB 13906 / BL2).